Consider the following 132-residue polypeptide: D-ribose pyranase (132 aa).

The Proton donor role is filled by H20. Residues D28, H99, and 121-123 (YSN) contribute to the substrate site.

This sequence belongs to the RbsD / FucU family. RbsD subfamily. Homodecamer.

The protein resides in the cytoplasm. It catalyses the reaction beta-D-ribopyranose = beta-D-ribofuranose. It participates in carbohydrate metabolism; D-ribose degradation; D-ribose 5-phosphate from beta-D-ribopyranose: step 1/2. Its function is as follows. Catalyzes the interconversion of beta-pyran and beta-furan forms of D-ribose. The sequence is that of D-ribose pyranase from Pseudomonas putida (strain W619).